Here is a 145-residue protein sequence, read N- to C-terminus: uncharacterized protein (145 aa).

The helical transmembrane segment at isoleucine 4–asparagine 24 threads the bilayer.

It is found in the membrane. This is an uncharacterized protein from Methanocaldococcus jannaschii (strain ATCC 43067 / DSM 2661 / JAL-1 / JCM 10045 / NBRC 100440) (Methanococcus jannaschii).